The sequence spans 708 residues: Assimilatory nitrate reductase (708 aa).

In terms of domain architecture, 4Fe-4S Mo/W bis-MGD-type spans 15–73 (TKQVPTTCMRCAVGCGHVHLGSENAYGLETVRGDPSHPVNNGLACGRGIRESADPAGEW). [4Fe-4S] cluster-binding residues include cysteine 22, cysteine 25, cysteine 29, and cysteine 59. Residues 586-613 (TTGREADGYNTGVRSRSDTPEEPVARVN) are disordered.

Belongs to the prokaryotic molybdopterin-containing oxidoreductase family. NasA/NapA/NarB subfamily. In terms of assembly, is probably a monomer. Initially characterized as a dimer of proteins with a MW of 105 and 50 kDa. Requires [4Fe-4S] cluster as cofactor. The cofactor is Mo-bis(molybdopterin guanine dinucleotide).

The protein localises to the cytoplasm. It catalyses the reaction nitrite + 2 oxidized [2Fe-2S]-[ferredoxin] + H2O = nitrate + 2 reduced [2Fe-2S]-[ferredoxin] + 2 H(+). Its pathway is nitrogen metabolism; nitrate reduction (assimilation). With respect to regulation, inhibited by cyanide and azide. In terms of biological role, nitrate reductase is a key enzyme involved in the first step of nitrate assimilation. Catalyzes the reduction of nitrate to nitrite, using ferredoxin as the electron donor. Can use reduced methyl viologen but neither NADPH nor NADH as electron donors. This Haloferax mediterranei (strain ATCC 33500 / DSM 1411 / JCM 8866 / NBRC 14739 / NCIMB 2177 / R-4) (Halobacterium mediterranei) protein is Assimilatory nitrate reductase.